A 515-amino-acid polypeptide reads, in one-letter code: Cytochrome P450 monooxygenase janP (515 aa).

A helical membrane pass occupies residues 20 to 36 (GFLWKYAAFMVFIYLLL). C456 is a heme binding site. N501 carries N-linked (GlcNAc...) asparagine glycosylation.

The protein belongs to the cytochrome P450 family. Heme serves as cofactor.

It localises to the membrane. It functions in the pathway secondary metabolite biosynthesis. Functionally, cytochrome P450 monooxygenase; part of the gene cluster that mediates the biosynthesis of the indole diterpenes janthitremanes such as shearinine K or shearinine A. The geranylgeranyl diphosphate (GGPP) synthase janG catalyzes the first step in janthitremane biosynthesis via conversion of farnesyl pyrophosphate and isopentyl pyrophosphate into geranylgeranyl pyrophosphate (GGPP). Condensation of indole-3-glycerol phosphate with GGPP by the prenyl transferase janC then forms 3-geranylgeranylindole (3-GGI). Epoxidation by the FAD-dependent monooxygenase janM leads to a epoxidized-GGI that is substrate of the terpene cyclase janB for cyclization to yield paspaline. Paspaline is subsequently converted to 13-desoxypaspaline by the cytochrome P450 monooxygenase janP, via beta-PC-M6 in a series of alpha-face oxidations. The cytochrome P450 monooxygenase janQ is proposed to carry out sequential beta-face oxidation steps at C-7 and C-13 of 13-desoxypaspaline to form paspalicine and paspalinine respectively. The indole diterpene prenyltransferase janD may then convert paspalinine into shearinine K which is substrate of janO and/or additional enzymes for oxidation and cyclization to generate shearinine A. The protein is Cytochrome P450 monooxygenase janP of Penicillium janthinellum (Penicillium vitale).